Here is a 371-residue protein sequence, read N- to C-terminus: N-acetyldiaminopimelate deacetylase (371 aa).

Residue Asp68 is part of the active site. Residue Glu127 is the Proton acceptor of the active site.

Belongs to the peptidase M20A family. N-acetyldiaminopimelate deacetylase subfamily.

It catalyses the reaction N-acetyl-(2S,6S)-2,6-diaminopimelate + H2O = (2S,6S)-2,6-diaminopimelate + acetate. It functions in the pathway amino-acid biosynthesis; L-lysine biosynthesis via DAP pathway; LL-2,6-diaminopimelate from (S)-tetrahydrodipicolinate (acetylase route): step 3/3. In terms of biological role, catalyzes the conversion of N-acetyl-diaminopimelate to diaminopimelate and acetate. This chain is N-acetyldiaminopimelate deacetylase, found in Listeria monocytogenes serotype 4b (strain CLIP80459).